The primary structure comprises 419 residues: Tyrosine--tRNA ligase (419 aa).

Tyr34 contacts L-tyrosine. A 'HIGH' region motif is present at residues 39 to 48 (PSGDSMHIGH). L-tyrosine is bound by residues Tyr168 and Gln172. The 'KMSKS' region signature appears at 230–234 (KFGKS). Lys233 lines the ATP pocket. One can recognise an S4 RNA-binding domain in the interval 352-418 (ANLVDWLVTL…GKKKYFLVSY (67 aa)).

It belongs to the class-I aminoacyl-tRNA synthetase family. TyrS type 1 subfamily. In terms of assembly, homodimer.

The protein resides in the cytoplasm. It carries out the reaction tRNA(Tyr) + L-tyrosine + ATP = L-tyrosyl-tRNA(Tyr) + AMP + diphosphate + H(+). Functionally, catalyzes the attachment of tyrosine to tRNA(Tyr) in a two-step reaction: tyrosine is first activated by ATP to form Tyr-AMP and then transferred to the acceptor end of tRNA(Tyr). The protein is Tyrosine--tRNA ligase of Listeria monocytogenes serovar 1/2a (strain ATCC BAA-679 / EGD-e).